A 226-amino-acid polypeptide reads, in one-letter code: 7-cyano-7-deazaguanine synthase (226 aa).

8-18 (ISGGLDSTTCL) serves as a coordination point for ATP. Zn(2+)-binding residues include Cys188, Cys198, Cys201, and Cys204.

Belongs to the QueC family. Zn(2+) serves as cofactor.

The enzyme catalyses 7-carboxy-7-deazaguanine + NH4(+) + ATP = 7-cyano-7-deazaguanine + ADP + phosphate + H2O + H(+). Its pathway is purine metabolism; 7-cyano-7-deazaguanine biosynthesis. Functionally, catalyzes the ATP-dependent conversion of 7-carboxy-7-deazaguanine (CDG) to 7-cyano-7-deazaguanine (preQ(0)). The chain is 7-cyano-7-deazaguanine synthase from Coxiella burnetii (strain Dugway 5J108-111).